A 109-amino-acid chain; its full sequence is Beta-keratin-related protein (109 aa).

Ser2 carries the N-acetylserine modification.

It belongs to the avian keratin family.

In Coturnix japonica (Japanese quail), this protein is Beta-keratin-related protein (BKJ).